The primary structure comprises 88 residues: Alpha-latrotoxin associated low molecular weight protein 2 (88 aa).

The signal sequence occupies residues 1 to 19 (MLKLICIVFLVTVLTFVVG). Intrachain disulfides connect Cys-30–Cys-66, Cys-46–Cys-62, and Cys-49–Cys-75.

The protein belongs to the arthropod CHH/MIH/GIH/VIH hormone family. Expressed by the venom gland.

It localises to the secreted. In terms of biological role, may increase the toxicity of alpha-latrotoxin and/or other venom components. Is non-toxic to mice and to the cockroach Periplaneta americana. The polypeptide is Alpha-latrotoxin associated low molecular weight protein 2 (Latrodectus geometricus (Brown widow spider)).